The primary structure comprises 159 residues: Protein B1 (159 aa).

A compositionally biased stretch (basic residues) spans 1 to 15 (MQKNMKTKKTKKRGR). 2 disordered regions span residues 1-100 (MQKN…RTRE) and 133-159 (PGHG…DPPR). The segment covering 16 to 31 (KEGNTPETERRMEPAR) has biased composition (basic and acidic residues). The segment covering 85–96 (RGRHIHTRGART) has biased composition (basic residues).

The polypeptide is Protein B1 (B1) (Human herpesvirus 6B (strain Z29) (HHV-6 variant B)).